The primary structure comprises 345 residues: Lysine-specific demethylase JMJ32 (345 aa).

The 194-residue stretch at 122-315 folds into the JmjC domain; it reads GYLQQQNDCF…IKYAYFNFLQ (194 aa). 3 residues coordinate Fe cation: His174, Asp176, and His281.

Belongs to the JARID1 histone demethylase family. Requires Fe(2+) as cofactor. As to expression, expressed ubiquitously including in vasculatures, leaves, siliques, roots and inflorescences. Present in the root meristem. Accumulates in cotyledons and root tips of young seedlings.

It is found in the nucleus. It localises to the cytoplasm. The protein localises to the endoplasmic reticulum. The enzyme catalyses N(6),N(6),N(6)-trimethyl-L-lysyl(27)-[histone H3] + 2-oxoglutarate + O2 = N(6),N(6)-dimethyl-L-lysyl(27)-[histone H3] + formaldehyde + succinate + CO2. It carries out the reaction N(6),N(6)-dimethyl-L-lysyl(27)-[histone H3] + 2-oxoglutarate + O2 = N(6)-methyl-L-lysyl(27)-[histone H3] + formaldehyde + succinate + CO2. It catalyses the reaction N(6),N(6),N(6)-trimethyl-L-lysyl(27)-[histone H3] + 2 2-oxoglutarate + 2 O2 = N(6)-methyl-L-lysyl(27)-[histone H3] + 2 formaldehyde + 2 succinate + 2 CO2. Functionally, histone demethylase that demethylates 'Lys-27' (H3K27me) of histone H3 with a specific activity for H3K27me3 and H3K27me2, and involved in the regulation of gene expression. No activity on H3K27me1. Together with JMJ30, regulates the flowering-repressor FLOWERING LOCUS C (FLC) locus by removing the repressive histone modification H3 lysine 27 trimethylation (H3K27me3), especially at elevated temperatures (e.g. 29 degrees Celsius), thus preventing extreme precocious flowering. JMJ30 and JMJ32 are regulators involved in the integration of abscisic acid (ABA) and brassinosteroids (BR) signaling pathways. Together with JMJ30, controls ABA-mediated growth arrest during the post-germination stage in unfavorable conditions, and responses to ABA during root development, via the removal of repressive histone mark (H3K27me3) from the SnRK2.8 promoter, thus promoting SnRK2.8 expression and subsequent kinase-dependent ABI3 activation. In addition, removes the repressive histone marks (H3K27me3) from the BZR1 locus in response to stress and ABA, thus activating the BR signaling pathway which, in turn, inhibits the ABA signaling pathway. The polypeptide is Lysine-specific demethylase JMJ32 (Arabidopsis thaliana (Mouse-ear cress)).